The chain runs to 472 residues: UDP-N-acetylmuramoyl-L-alanyl-D-glutamate--2,6-diaminopimelate ligase (472 aa).

S21 is a UDP-N-acetyl-alpha-D-muramoyl-L-alanyl-D-glutamate binding site. 99–105 provides a ligand contact to ATP; it reads GTNGKTS. UDP-N-acetyl-alpha-D-muramoyl-L-alanyl-D-glutamate contacts are provided by residues 143–144, S170, Q176, and R178; that span reads TT. K210 carries the N6-carboxylysine modification. Meso-2,6-diaminopimelate-binding positions include R367, 391 to 394, G440, and E444; that span reads DNPR. The Meso-diaminopimelate recognition motif signature appears at 391 to 394; the sequence is DNPR.

Belongs to the MurCDEF family. MurE subfamily. Mg(2+) is required as a cofactor. In terms of processing, carboxylation is probably crucial for Mg(2+) binding and, consequently, for the gamma-phosphate positioning of ATP.

Its subcellular location is the cytoplasm. It carries out the reaction UDP-N-acetyl-alpha-D-muramoyl-L-alanyl-D-glutamate + meso-2,6-diaminopimelate + ATP = UDP-N-acetyl-alpha-D-muramoyl-L-alanyl-gamma-D-glutamyl-meso-2,6-diaminopimelate + ADP + phosphate + H(+). It functions in the pathway cell wall biogenesis; peptidoglycan biosynthesis. In terms of biological role, catalyzes the addition of meso-diaminopimelic acid to the nucleotide precursor UDP-N-acetylmuramoyl-L-alanyl-D-glutamate (UMAG) in the biosynthesis of bacterial cell-wall peptidoglycan. The sequence is that of UDP-N-acetylmuramoyl-L-alanyl-D-glutamate--2,6-diaminopimelate ligase from Anaplasma marginale (strain St. Maries).